The sequence spans 1138 residues: Pesticidal crystal protein Cry7Ab (1138 aa).

The protein belongs to the delta endotoxin family.

Its function is as follows. Promotes colloidosmotic lysis by binding to the midgut epithelial cells of Coleoptera. In Bacillus thuringiensis subsp. dakota, this protein is Pesticidal crystal protein Cry7Ab (cry7Ab).